We begin with the raw amino-acid sequence, 884 residues long: Alanine--tRNA ligase (884 aa).

Zn(2+) is bound by residues His-568, His-572, Cys-670, and His-674.

This sequence belongs to the class-II aminoacyl-tRNA synthetase family. It depends on Zn(2+) as a cofactor.

It is found in the cytoplasm. It carries out the reaction tRNA(Ala) + L-alanine + ATP = L-alanyl-tRNA(Ala) + AMP + diphosphate. In terms of biological role, catalyzes the attachment of alanine to tRNA(Ala) in a two-step reaction: alanine is first activated by ATP to form Ala-AMP and then transferred to the acceptor end of tRNA(Ala). Also edits incorrectly charged Ser-tRNA(Ala) and Gly-tRNA(Ala) via its editing domain. This Synechococcus sp. (strain JA-2-3B'a(2-13)) (Cyanobacteria bacterium Yellowstone B-Prime) protein is Alanine--tRNA ligase.